Here is a 282-residue protein sequence, read N- to C-terminus: 2,3,4,5-tetrahydropyridine-2,6-dicarboxylate N-succinyltransferase (282 aa).

Substrate contacts are provided by Arg109 and Asp146.

This sequence belongs to the transferase hexapeptide repeat family. Homotrimer.

It is found in the cytoplasm. The enzyme catalyses (S)-2,3,4,5-tetrahydrodipicolinate + succinyl-CoA + H2O = (S)-2-succinylamino-6-oxoheptanedioate + CoA. It functions in the pathway amino-acid biosynthesis; L-lysine biosynthesis via DAP pathway; LL-2,6-diaminopimelate from (S)-tetrahydrodipicolinate (succinylase route): step 1/3. The sequence is that of 2,3,4,5-tetrahydropyridine-2,6-dicarboxylate N-succinyltransferase from Bartonella henselae (strain ATCC 49882 / DSM 28221 / CCUG 30454 / Houston 1) (Rochalimaea henselae).